Reading from the N-terminus, the 309-residue chain is Dehydrogenase/reductase SDR family member 7B (309 aa).

Residues 1–4 (MDLT) lie on the Cytoplasmic side of the membrane. Residues 5–25 (TWAIFPLLLGSIGVYSLYKLL) traverse the membrane as a helical; Signal-anchor for type II membrane protein segment. At 26 to 272 (QRLRSGAYLQ…AVGERRKELL (247 aa)) the chain is on the lumenal side. 2 residues coordinate NAD(+): Ser-46 and Leu-48. Ser-178 provides a ligand contact to substrate. NAD(+)-binding residues include Tyr-191, Lys-195, and Thr-226. Tyr-191 functions as the Proton acceptor in the catalytic mechanism.

It belongs to the short-chain dehydrogenases/reductases (SDR) family.

The protein resides in the endoplasmic reticulum membrane. Its function is as follows. Putative oxidoreductase. This is Dehydrogenase/reductase SDR family member 7B (dhrs7b) from Xenopus tropicalis (Western clawed frog).